The sequence spans 199 residues: Pneumococcal vaccine antigen A homolog (199 aa).

It localises to the cell surface. The chain is Pneumococcal vaccine antigen A homolog (pvaA) from Streptococcus pyogenes serotype M1.